A 378-amino-acid chain; its full sequence is Putative glutamate--cysteine ligase 2-1 (378 aa).

This sequence belongs to the glutamate--cysteine ligase type 2 family. YbdK subfamily.

It catalyses the reaction L-cysteine + L-glutamate + ATP = gamma-L-glutamyl-L-cysteine + ADP + phosphate + H(+). ATP-dependent carboxylate-amine ligase which exhibits weak glutamate--cysteine ligase activity. This is Putative glutamate--cysteine ligase 2-1 from Corynebacterium efficiens (strain DSM 44549 / YS-314 / AJ 12310 / JCM 11189 / NBRC 100395).